The following is a 280-amino-acid chain: Phosphatidylserine decarboxylase proenzyme (280 aa).

Catalysis depends on charge relay system; for autoendoproteolytic cleavage activity residues D86, H143, and S246. The Schiff-base intermediate with substrate; via pyruvic acid; for decarboxylase activity role is filled by S246. S246 carries the post-translational modification Pyruvic acid (Ser); by autocatalysis.

This sequence belongs to the phosphatidylserine decarboxylase family. PSD-B subfamily. Prokaryotic type I sub-subfamily. As to quaternary structure, heterodimer of a large membrane-associated beta subunit and a small pyruvoyl-containing alpha subunit. It depends on pyruvate as a cofactor. Post-translationally, is synthesized initially as an inactive proenzyme. Formation of the active enzyme involves a self-maturation process in which the active site pyruvoyl group is generated from an internal serine residue via an autocatalytic post-translational modification. Two non-identical subunits are generated from the proenzyme in this reaction, and the pyruvate is formed at the N-terminus of the alpha chain, which is derived from the carboxyl end of the proenzyme. The autoendoproteolytic cleavage occurs by a canonical serine protease mechanism, in which the side chain hydroxyl group of the serine supplies its oxygen atom to form the C-terminus of the beta chain, while the remainder of the serine residue undergoes an oxidative deamination to produce ammonia and the pyruvoyl prosthetic group on the alpha chain. During this reaction, the Ser that is part of the protease active site of the proenzyme becomes the pyruvoyl prosthetic group, which constitutes an essential element of the active site of the mature decarboxylase.

The protein resides in the cell membrane. The enzyme catalyses a 1,2-diacyl-sn-glycero-3-phospho-L-serine + H(+) = a 1,2-diacyl-sn-glycero-3-phosphoethanolamine + CO2. The protein operates within phospholipid metabolism; phosphatidylethanolamine biosynthesis; phosphatidylethanolamine from CDP-diacylglycerol: step 2/2. Functionally, catalyzes the formation of phosphatidylethanolamine (PtdEtn) from phosphatidylserine (PtdSer). The polypeptide is Phosphatidylserine decarboxylase proenzyme (Brevibacillus brevis (strain 47 / JCM 6285 / NBRC 100599)).